Here is a 666-residue protein sequence, read N- to C-terminus: Chaperone protein HtpG (666 aa).

Residues 1–374 (MSELNPVDNQ…SADLPLNVSR (374 aa)) form an a; substrate-binding region. The segment at 375–593 (ELLQESRDVK…EGELSPQMIQ (219 aa)) is b. A c region spans residues 594-666 (MLKQMGQDVP…LRRVNELLMR (73 aa)).

Belongs to the heat shock protein 90 family. As to quaternary structure, homodimer.

Its subcellular location is the cytoplasm. Its function is as follows. Molecular chaperone. Has ATPase activity. This chain is Chaperone protein HtpG, found in Psychrobacter cryohalolentis (strain ATCC BAA-1226 / DSM 17306 / VKM B-2378 / K5).